A 435-amino-acid polypeptide reads, in one-letter code: MKRLPLHLLDEILFNLDPKSLGKMRCTNKSINTHISDDPNFKFEYFSRIGSSLLHISKVGSKFLCFYPYAISRLFKNMTPLKNLCNILGSCSGLVLLSINGILCVANPLTKKFRFLHYSIWGNETWIGFAVDQIDRATQRFKIVFISEQLEVSNPYETTYQFRINTGESWSLSKTTITCRASNLKKGKNSKPVYVNGDLHWLRKDGSIVAFNPETEKARLIQSQFNRKPGKLLLCTGDNRLTLISATDAVISVYALETDGQWILVRWIKNEVVHQSLPLLYWNVQAYDGKCLLVRMMSLVGSVIHRYDLRANKWRVLGSIPTWCDADRDFFLFKPSWSSVIGLLDQEHVHVLMPMPMPMPMPMPMPMHMHMHMHMPMPMAMPMPMPIAMAMPMPMPMPMPMPMTKTETETVTRSEVISSVMAIMGLVNRTLSFIN.

The F-box domain maps to 1–49 (MKRLPLHLLDEILFNLDPKSLGKMRCTNKSINTHISDDPNFKFEYFSRI). Kelch repeat units lie at residues 192–238 (PVYV…CTGD) and 280–335 (LYWN…LFKP).

This is Putative F-box/kelch-repeat protein At1g20790 from Arabidopsis thaliana (Mouse-ear cress).